Consider the following 173-residue polypeptide: Ribosome maturation factor RimM (173 aa).

One can recognise a PRC barrel domain in the interval Glu-78 to Glu-157. The segment at Pro-152 to Pro-173 is disordered.

The protein belongs to the RimM family. In terms of assembly, binds ribosomal protein uS19.

It localises to the cytoplasm. An accessory protein needed during the final step in the assembly of 30S ribosomal subunit, possibly for assembly of the head region. Essential for efficient processing of 16S rRNA. May be needed both before and after RbfA during the maturation of 16S rRNA. It has affinity for free ribosomal 30S subunits but not for 70S ribosomes. The chain is Ribosome maturation factor RimM from Beijerinckia indica subsp. indica (strain ATCC 9039 / DSM 1715 / NCIMB 8712).